The chain runs to 98 residues: Essential MCU regulator, mitochondrial (98 aa).

Residues Ile52–Ala72 traverse the membrane as a helical segment.

Belongs to the SMDT1/EMRE family.

It is found in the mitochondrion inner membrane. Functionally, essential regulatory subunit of the mitochondrial calcium uniporter (mcu) channel, a protein that mediates calcium uptake into mitochondria. The protein is Essential MCU regulator, mitochondrial of Anopheles gambiae (African malaria mosquito).